Consider the following 581-residue polypeptide: Leucine-rich repeat-containing protein 15 (581 aa).

Residues 1-21 form the signal peptide; the sequence is MPLKHYLLLLVGCQAWGAGLA. In terms of domain architecture, LRRNT spans 22–53; that stretch reads YHGCPSECTCSRASQVECTGARIVAVPTPLPW. The Extracellular portion of the chain corresponds to 22–538; the sequence is YHGCPSECTC…VWGMTQAQSG (517 aa). LRR repeat units lie at residues 54-75, 78-99, 102-123, 126-147, 150-171, 174-195, 198-219, 222-243, 246-267, 270-291, 294-315, 318-339, 342-363, 366-387, and 390-411; these read NAMSLQILNTHITELNESPFLN, ALIALRIEKNELSRITPGAFRN, SLRYLSLANNKLQVLPIGLFQG, SLESLLLSSNQLLQIQPAHFSQ, NLKELQLHGNHLEYIPDGAFDH, GLTKLNLGKNSLTHISPRVFQH, NLQVLRLYENRLTDIPMGTFDG, NLQELALQQNQIGLLSPGLFHN, NLQRLYLSNNHISQLPPSVFMQ, QLNRLTLFGNSLKELSPGIFGP, NLRELWLYDNHISSLPDNVFSN, QLQVLILSRNQISFISPGAFNG, ELRELSLHTNALQDLDGNVFRM, NLQNISLQNNRLRQLPGNIFAN, and GLMAIQLQNNQLENLPLGIFDH. An N-linked (GlcNAc...) asparagine glycan is attached at Asn-75. A glycan (N-linked (GlcNAc...) asparagine) is linked at Asn-369. The LRRCT domain maps to 423–475; the sequence is NPWRCDSDILPLRNWLLLNQPRLGTDTVPVCFSPANVRGQSLIIINVNVAVPS. Residues 489-509 form a disordered region; sequence WYPDTPSYPDTTSVSSTTELT. Residues 499-509 show a composition bias toward low complexity; that stretch reads TTSVSSTTELT. A helical membrane pass occupies residues 539–559; sequence LAIAAIVIGIVALACSLAACV. Topologically, residues 560–581 are cytoplasmic; sequence GCCCCKKRSQAVLMQMKAPNEC.

(Microbial infection) Interacts with human coronavirus SARS-CoV-2 spike protein (via RBD domain); the interaction is direct and sequesters virions at the cell surface. As to quaternary structure, (Microbial infection) Interacts with human coronavirus SARS-CoV-2 spike protein (via RBD domain); the interaction is direct. In terms of tissue distribution, expressed in brain and placenta. Expressed in lung fibroblasts. Expressed in chodrocytes.

It localises to the cell membrane. (Microbial infection) Modulates the ability of SARS-CoV-2 to infect host cells through interaction with the spike protein. Does not act as a SARS-CoV-2 entry receptor but sequesters virions and antagonizes in trans SARS-CoV-2 infection of ACE2(+) cells when expressed on nearby cells. This Homo sapiens (Human) protein is Leucine-rich repeat-containing protein 15 (LRRC15).